Reading from the N-terminus, the 283-residue chain is GTPase Era (283 aa).

Residues 7–175 (YCGHVIIVGK…KNIIKSYLPE (169 aa)) enclose the Era-type G domain. Residues 15-22 (GKANVGKS) are G1. 15 to 22 (GKANVGKS) contributes to the GTP binding site. The G2 stretch occupies residues 41–45 (NTTQS). The segment at 62-65 (DTPG) is G3. GTP is bound by residues 62–66 (DTPGV) and 124–127 (NKID). Positions 124–127 (NKID) are G4. The segment at 154 to 156 (ISA) is G5. The 86-residue stretch at 198 to 283 (IREQLILFLG…HLVLWVKDKN (86 aa)) folds into the KH type-2 domain.

It belongs to the TRAFAC class TrmE-Era-EngA-EngB-Septin-like GTPase superfamily. Era GTPase family. Monomer.

The protein localises to the cytoplasm. It localises to the cell membrane. In terms of biological role, an essential GTPase that binds both GDP and GTP, with rapid nucleotide exchange. Plays a role in 16S rRNA processing and 30S ribosomal subunit biogenesis and possibly also in cell cycle regulation and energy metabolism. The chain is GTPase Era from Buchnera aphidicola subsp. Acyrthosiphon pisum (strain APS) (Acyrthosiphon pisum symbiotic bacterium).